Consider the following 875-residue polypeptide: Serine/threonine-protein kinase D2 (875 aa).

Low complexity predominate over residues 1–12; the sequence is MAAAPSHPAGLP. A disordered region spans residues 1–35; it reads MAAAPSHPAGLPGSPGPGSPPPPGGLDLQSPPPLL. Pro residues predominate over residues 14–35; sequence SPGPGSPPPPGGLDLQSPPPLL. Position 30 is a phosphoserine (S30). Phosphotyrosine is present on Y87. A Phorbol-ester/DAG-type 1 zinc finger spans residues 138–188; it reads PHALTVHSYRAPAFCDHCGEMLFGLVRQGLKCDGCGLNYHKRCAFSIPNNC. Residues S197, S198, S200, S203, S206, S211, S212, and S214 each carry the phosphoserine modification. The disordered stretch occupies residues 224 to 247; that stretch reads RSTTDLLPRRPPSSSSSSSSSSFY. Over residues 236 to 245 the composition is skewed to low complexity; the sequence is SSSSSSSSSS. S244 is modified (phosphoserine; by CSNK1D and CSNK1E). At S245 the chain carries Phosphoserine. Residues 265-315 form a Phorbol-ester/DAG-type 2 zinc finger; the sequence is PHTFLIHSYTRPTVCQACKKLLKGLFRQGLQCKDCKFNCHKRCATRVPNDC. The tract at residues 332–374 is disordered; it reads DYSEADKSSISDELEDSGVIPGSHSESALHASEEEEGEGHKAQ. The PH domain occupies 398 to 510; sequence TTLREGWVVH…WETAIRQALM (113 aa). Phosphotyrosine is present on Y408. Y439 carries the phosphotyrosine; by ABL1 modification. Phosphoserine is present on S519. One can recognise a Protein kinase domain in the interval 552–808; that stretch reads IFPDEVLGSG…VDKSLSHPWL (257 aa). ATP-binding positions include 558–566 and K581; that span reads LGSGQFGVV. D675 serves as the catalytic Proton acceptor. Residue S707 is modified to Phosphoserine; by PKC. Residue S711 is modified to Phosphoserine; by autocatalysis. The residue at position 718 (Y718) is a Phosphotyrosine; by ABL1. The Important for ABL1-mediated Tyr-718 phosphorylation signature appears at 725–727; the sequence is LNQ. S873 carries the post-translational modification Phosphoserine; by autocatalysis.

This sequence belongs to the protein kinase superfamily. CAMK Ser/Thr protein kinase family. PKD subfamily. As to quaternary structure, interacts (via C-terminus) with LCK. Interacts (via N-terminus and zing-finger domain 1 and 2) with PRKCD in response to oxidative stress; the interaction is independent of PRKD2 tyrosine phosphorylation. Mg(2+) serves as cofactor. In terms of processing, phosphorylation of Ser-873 correlates with the activation status of the kinase. Ser-707 is probably phosphorylated by PKC. Phosphorylation at Ser-244 by CSNK1D and CSNK1E promotes nuclear localization and substrate targeting. Phosphorylation at Ser-244, Ser-707 and Ser-711 is required for nuclear localization. Phosphorylated at Tyr-438 by ABL1 in response to oxidative stress. Phosphorylated at Tyr-718 by ABL1 specifically in response to oxidative stress; requires prior phosphorylation at Ser-707 or/and Ser-711.

The protein localises to the cytoplasm. Its subcellular location is the cell membrane. It localises to the golgi apparatus. The protein resides in the trans-Golgi network. It catalyses the reaction L-seryl-[protein] + ATP = O-phospho-L-seryl-[protein] + ADP + H(+). It carries out the reaction L-threonyl-[protein] + ATP = O-phospho-L-threonyl-[protein] + ADP + H(+). With respect to regulation, activated by DAG and phorbol esters. Phorbol-ester/DAG-type domains bind DAG, mediating translocation to membranes. Autophosphorylation of Ser-711 and phosphorylation of Ser-707 by PKC relieves auto-inhibition by the PH domain. Catalytic activity is further increased by phosphorylation at Tyr-718 in response to oxidative stress. Functionally, serine/threonine-protein kinase that converts transient diacylglycerol (DAG) signals into prolonged physiological effects downstream of PKC, and is involved in the regulation of cell proliferation via MAPK1/3 (ERK1/2) signaling, oxidative stress-induced NF-kappa-B activation, inhibition of HDAC7 transcriptional repression, signaling downstream of T-cell antigen receptor (TCR) and cytokine production, and plays a role in Golgi membrane trafficking, angiogenesis, secretory granule release and cell adhesion. May potentiate mitogenesis induced by the neuropeptide bombesin by mediating an increase in the duration of MAPK1/3 (ERK1/2) signaling, which leads to accumulation of immediate-early gene products including FOS that stimulate cell cycle progression. In response to oxidative stress, is phosphorylated at Tyr-438 and Tyr-718 by ABL1, which leads to the activation of PRKD2 without increasing its catalytic activity, and mediates activation of NF-kappa-B. In response to the activation of the gastrin receptor CCKBR, is phosphorylated at Ser-244 by CSNK1D and CSNK1E, translocates to the nucleus, phosphorylates HDAC7, leading to nuclear export of HDAC7 and inhibition of HDAC7 transcriptional repression of NR4A1/NUR77. Upon TCR stimulation, is activated independently of ZAP70, translocates from the cytoplasm to the nucleus and is required for interleukin-2 (IL2) promoter up-regulation. During adaptive immune responses, is required in peripheral T-lymphocytes for the production of the effector cytokines IL2 and IFNG after TCR engagement and for optimal induction of antibody responses to antigens. In epithelial cells stimulated with lysophosphatidic acid (LPA), is activated through a PKC-dependent pathway and mediates LPA-stimulated interleukin-8 (IL8) secretion via a NF-kappa-B-dependent pathway. During TCR-induced T-cell activation, interacts with and is activated by the tyrosine kinase LCK, which results in the activation of the NFAT transcription factors. In the trans-Golgi network (TGN), regulates the fission of transport vesicles that are on their way to the plasma membrane and in polarized cells is involved in the transport of proteins from the TGN to the basolateral membrane. Plays an important role in endothelial cell proliferation and migration prior to angiogenesis, partly through modulation of the expression of KDR/VEGFR2 and FGFR1, two key growth factor receptors involved in angiogenesis. In secretory pathway, is required for the release of chromogranin-A (CHGA)-containing secretory granules from the TGN. Downstream of PRKCA, plays important roles in angiotensin-2-induced monocyte adhesion to endothelial cells. This is Serine/threonine-protein kinase D2 (Prkd2) from Mus musculus (Mouse).